Reading from the N-terminus, the 295-residue chain is Pyridoxal 5'-phosphate synthase subunit PdxS (295 aa).

Asp-25 lines the D-ribose 5-phosphate pocket. The active-site Schiff-base intermediate with D-ribose 5-phosphate is the Lys-82. Position 154 (Gly-154) interacts with D-ribose 5-phosphate. Arg-166 contributes to the D-glyceraldehyde 3-phosphate binding site. D-ribose 5-phosphate-binding positions include Gly-215 and Gly-236 to Ser-237.

The protein belongs to the PdxS/SNZ family. In terms of assembly, in the presence of PdxT, forms a dodecamer of heterodimers.

The enzyme catalyses aldehydo-D-ribose 5-phosphate + D-glyceraldehyde 3-phosphate + L-glutamine = pyridoxal 5'-phosphate + L-glutamate + phosphate + 3 H2O + H(+). It participates in cofactor biosynthesis; pyridoxal 5'-phosphate biosynthesis. Functionally, catalyzes the formation of pyridoxal 5'-phosphate from ribose 5-phosphate (RBP), glyceraldehyde 3-phosphate (G3P) and ammonia. The ammonia is provided by the PdxT subunit. Can also use ribulose 5-phosphate and dihydroxyacetone phosphate as substrates, resulting from enzyme-catalyzed isomerization of RBP and G3P, respectively. This Staphylococcus saprophyticus subsp. saprophyticus (strain ATCC 15305 / DSM 20229 / NCIMB 8711 / NCTC 7292 / S-41) protein is Pyridoxal 5'-phosphate synthase subunit PdxS.